Consider the following 901-residue polypeptide: Bifunctional protein STORR (901 aa).

Residues 12-32 form a helical membrane-spanning segment; that stretch reads TSSVVALLLALVSILSSVVVL. Cysteine 513 is a heme binding site.

In the N-terminal section; belongs to the cytochrome P450 family. This sequence in the C-terminal section; belongs to the aldo/keto reductase family. Requires heme as cofactor.

The protein localises to the membrane. The catalysed reaction is (R)-reticuline + NADP(+) = 1,2-dehydroreticuline + NADPH + H(+). It catalyses the reaction (S)-reticuline + reduced [NADPH--hemoprotein reductase] + O2 = 1,2-dehydroreticuline + oxidized [NADPH--hemoprotein reductase] + 2 H2O + H(+). It participates in alkaloid biosynthesis; morphine biosynthesis. Functionally, bifunctional protein involved in the biosynthesis of morphinan-type benzylisoquinoline alkaloids. Required for the isomerization of (S)- to (R)-reticuline. The cytochrome P450 module is responsible for the conversion of (S)-reticuline to 1,2-dehydroreticuline while the oxidoreductase module converts 1,2-dehydroreticuline to (R)-reticuline. This chain is Bifunctional protein STORR, found in Papaver somniferum (Opium poppy).